Consider the following 162-residue polypeptide: Ribosomal RNA large subunit methyltransferase H (162 aa).

Residues Leu78 and Gly110 each coordinate S-adenosyl-L-methionine.

Belongs to the RNA methyltransferase RlmH family. As to quaternary structure, homodimer.

Its subcellular location is the cytoplasm. It catalyses the reaction pseudouridine(1915) in 23S rRNA + S-adenosyl-L-methionine = N(3)-methylpseudouridine(1915) in 23S rRNA + S-adenosyl-L-homocysteine + H(+). Specifically methylates the pseudouridine at position 1915 (m3Psi1915) in 23S rRNA. This is Ribosomal RNA large subunit methyltransferase H from Bradyrhizobium sp. (strain ORS 278).